An 846-amino-acid polypeptide reads, in one-letter code: Protein kintoun (846 aa).

Disordered regions lie at residues 216 to 240 (TAEEQEPHPLAHMFPTKPPAPGKPE), 372 to 405 (LRHFSREDSGVELHSNSESPVEEDPDGELSDSKA), 574 to 631 (QALK…ESAC), and 762 to 846 (KKNQ…EMDD). The span at 372–382 (LRHFSREDSGV) shows a compositional bias: basic and acidic residues. S380 carries the phosphoserine modification. A compositionally biased stretch (acidic residues) spans 391–400 (PVEEDPDGEL). Positions 583-603 (GTKEEEEKGNQDQEPESDKQH) are enriched in basic and acidic residues. Basic residues-rich tracts occupy residues 611 to 622 (KAGKKQRKRNKK) and 762 to 776 (KKNQKRRDLKLRAQQ). S780 is subject to Phosphoserine. A compositionally biased stretch (polar residues) spans 795-809 (LKQQENQSRNCNKPN).

It belongs to the PIH1 family. Kintoun subfamily. As to quaternary structure, interacts with Pp1alpha-96A, Pp1-87B, Pp1-13C and flw.

Its subcellular location is the cytoplasm. Its function is as follows. Required for cytoplasmic pre-assembly of axonemal dyneins, thereby playing a central role in motility in cilia and flagella. Involved in pre-assembly of dynein arm complexes in the cytoplasm before intraflagellar transport loads them for the ciliary compartment. This Drosophila yakuba (Fruit fly) protein is Protein kintoun.